A 243-amino-acid chain; its full sequence is DNA repair protein RecO (243 aa).

It belongs to the RecO family.

Its function is as follows. Involved in DNA repair and RecF pathway recombination. The chain is DNA repair protein RecO from Beutenbergia cavernae (strain ATCC BAA-8 / DSM 12333 / CCUG 43141 / JCM 11478 / NBRC 16432 / NCIMB 13614 / HKI 0122).